We begin with the raw amino-acid sequence, 457 residues long: D-xylose transporter (457 aa).

A run of 10 helical transmembrane segments spans residues 14-34, 46-66, 81-101, 104-124, 131-151, 164-184, 244-264, 281-301, 309-329, and 338-358; these read ALGG…ILFI, GWVV…IGPS, IIFF…TLII, IILG…LAEL, GTVS…AYIT, WMLG…LILP, LIIG…TVLY, LLAH…AVAI, KIVN…SIGM, and AAII…ATWG. Residue Gln138 coordinates beta-D-xylose. Residues 254–255 and Asn260 each bind beta-D-xylose; that span reads QQ. Residues Trp362 and Asn385 each contribute to the beta-D-xylose site. 2 helical membrane-spanning segments follow: residues 380 to 400 and 402 to 422; these read FASV…PSLL and FFGT…SIWF.

This sequence belongs to the major facilitator superfamily. Sugar transporter (TC 2.A.1.1) family.

Its subcellular location is the cell membrane. Transport is inhibited by 6-deoxy-D-glucose. Functionally, uptake of D-xylose across the boundary membrane with the concomitant transport of protons into the cell (symport system). Transport is driven by the proton motive force generated by either malolactic fermentation or by the metabolism of D-glucose. This is D-xylose transporter from Levilactobacillus brevis (Lactobacillus brevis).